A 498-amino-acid polypeptide reads, in one-letter code: ATP synthase subunit beta, chloroplastic (498 aa).

Residue 172 to 179 (GGAGVGKT) participates in ATP binding.

Belongs to the ATPase alpha/beta chains family. In terms of assembly, F-type ATPases have 2 components, CF(1) - the catalytic core - and CF(0) - the membrane proton channel. CF(1) has five subunits: alpha(3), beta(3), gamma(1), delta(1), epsilon(1). CF(0) has four main subunits: a(1), b(1), b'(1) and c(9-12).

It localises to the plastid. It is found in the chloroplast thylakoid membrane. It catalyses the reaction ATP + H2O + 4 H(+)(in) = ADP + phosphate + 5 H(+)(out). Functionally, produces ATP from ADP in the presence of a proton gradient across the membrane. The catalytic sites are hosted primarily by the beta subunits. This chain is ATP synthase subunit beta, chloroplastic, found in Lolium perenne (Perennial ryegrass).